The primary structure comprises 484 residues: Glutamyl-tRNA(Gln) amidotransferase subunit A (484 aa).

Residues K77 and S152 each act as charge relay system in the active site. Catalysis depends on S176, which acts as the Acyl-ester intermediate.

The protein belongs to the amidase family. GatA subfamily. As to quaternary structure, heterotrimer of A, B and C subunits.

The catalysed reaction is L-glutamyl-tRNA(Gln) + L-glutamine + ATP + H2O = L-glutaminyl-tRNA(Gln) + L-glutamate + ADP + phosphate + H(+). Its function is as follows. Allows the formation of correctly charged Gln-tRNA(Gln) through the transamidation of misacylated Glu-tRNA(Gln) in organisms which lack glutaminyl-tRNA synthetase. The reaction takes place in the presence of glutamine and ATP through an activated gamma-phospho-Glu-tRNA(Gln). The sequence is that of Glutamyl-tRNA(Gln) amidotransferase subunit A from Pseudomonas aeruginosa (strain ATCC 15692 / DSM 22644 / CIP 104116 / JCM 14847 / LMG 12228 / 1C / PRS 101 / PAO1).